The primary structure comprises 468 residues: Glutathione reductase (468 aa).

FAD is bound by residues Ser-17 and Gly-18. Ser-17 contributes to the glutathione binding site. Arg-24 serves as a coordination point for glutathione. Positions 38, 45, 46, and 54 each coordinate FAD. Cys-46 and Cys-51 are joined by a disulfide. Position 103 (Tyr-103) interacts with glutathione. Ala-119 is a binding site for FAD. Positions 185, 188, 191, 208, 214, and 276 each coordinate NADP(+). Asp-317 is a binding site for FAD. Glu-323 contacts NADP(+). FAD is bound at residue Thr-325. Arg-333 is a binding site for glutathione. Val-358 serves as a coordination point for NADP(+). Residue Lys-410 participates in glutathione binding. FAD is bound at residue His-457. His-457 acts as the Proton acceptor in catalysis.

It belongs to the class-I pyridine nucleotide-disulfide oxidoreductase family. In terms of assembly, homodimer. FAD is required as a cofactor.

The protein localises to the cytoplasm. Its subcellular location is the mitochondrion. The enzyme catalyses 2 glutathione + NADP(+) = glutathione disulfide + NADPH + H(+). Its function is as follows. Catalyzes the reduction of glutathione disulfide (GSSG) to reduced glutathione (GSH). Constitutes the major mechanism to maintain a high GSH:GSSG ratio in the cytosol. The sequence is that of Glutathione reductase (gtr-1) from Neurospora crassa (strain ATCC 24698 / 74-OR23-1A / CBS 708.71 / DSM 1257 / FGSC 987).